A 390-amino-acid polypeptide reads, in one-letter code: Mannitol-1-phosphate 5-dehydrogenase (390 aa).

Alanine 3 to glycine 14 is a binding site for NAD(+).

The protein belongs to the mannitol dehydrogenase family.

It catalyses the reaction D-mannitol 1-phosphate + NAD(+) = beta-D-fructose 6-phosphate + NADH + H(+). This Buchnera aphidicola subsp. Baizongia pistaciae (strain Bp) protein is Mannitol-1-phosphate 5-dehydrogenase.